Consider the following 284-residue polypeptide: Bifunctional protein FolD (284 aa).

NADP(+) is bound by residues 165 to 167 and Ser-190; that span reads GRS.

The protein belongs to the tetrahydrofolate dehydrogenase/cyclohydrolase family. Homodimer.

It carries out the reaction (6R)-5,10-methylene-5,6,7,8-tetrahydrofolate + NADP(+) = (6R)-5,10-methenyltetrahydrofolate + NADPH. The enzyme catalyses (6R)-5,10-methenyltetrahydrofolate + H2O = (6R)-10-formyltetrahydrofolate + H(+). It functions in the pathway one-carbon metabolism; tetrahydrofolate interconversion. Catalyzes the oxidation of 5,10-methylenetetrahydrofolate to 5,10-methenyltetrahydrofolate and then the hydrolysis of 5,10-methenyltetrahydrofolate to 10-formyltetrahydrofolate. The sequence is that of Bifunctional protein FolD from Streptococcus equi subsp. equi (strain 4047).